A 466-amino-acid polypeptide reads, in one-letter code: MSLPSRLPAILQAVMQGQPRALADSHYPRWHHAPVTGLMNDPNGFIEFAGRYHLFYQWNPLACDHTFKCWAHWSSIDLLHWQHEPIALMPDEEYDRNGCYSGSAVDNNGTLTLCYTGNVKFAEGGRTAWQCLATENADGTFRKIGPVLPLPEGYTGHVRDPKVWRHEDLWYMVLGAQDRQKRGKVLLFSSADLHQWTSMGEIAGHGINGLDDVGYMWECPDLFPLGDQHILICCPQGIAREEECYLNTYPAVWMAGEFDYAAGAFRHGELHELDAGFEFYAPQTMLTSDGRRLLVGWMGVPEGEEMLQPTLNNGWIHQMTCLRELEFINGQLYQRPLRELSALRGEANGWSGNALPLAPMEIDLQTRGGDMLSLDFGGVLTLECDASGLRLARRSLASDEMHYRYWRGNVRSLRVFIDQSSVEIFINGGEGVMSSRYFPACSGQLTFSGITPDAFCYWPLRTCMVE.

Substrate-binding positions include 38–41 (LMND), Q57, 100–101 (YS), 159–160 (RD), and E218. Residue D41 is part of the active site.

This sequence belongs to the glycosyl hydrolase 32 family.

The protein localises to the cytoplasm. It carries out the reaction Hydrolysis of terminal non-reducing beta-D-fructofuranoside residues in beta-D-fructofuranosides.. It functions in the pathway glycan biosynthesis; sucrose metabolism. Functionally, enables the bacterium to metabolize sucrose as a sole carbon source. The chain is Sucrose-6-phosphate hydrolase (scrB) from Salmonella typhimurium.